A 305-amino-acid polypeptide reads, in one-letter code: N-acetylmuramic acid 6-phosphate etherase (305 aa).

Positions 59 to 222 (TSKALGKGGR…STGVMVKLGK (164 aa)) constitute an SIS domain. Catalysis depends on Glu-87, which acts as the Proton donor. Glu-118 is an active-site residue.

Belongs to the GCKR-like family. MurNAc-6-P etherase subfamily. Homodimer.

The catalysed reaction is N-acetyl-D-muramate 6-phosphate + H2O = N-acetyl-D-glucosamine 6-phosphate + (R)-lactate. Its pathway is amino-sugar metabolism; N-acetylmuramate degradation. Its function is as follows. Specifically catalyzes the cleavage of the D-lactyl ether substituent of MurNAc 6-phosphate, producing GlcNAc 6-phosphate and D-lactate. This chain is N-acetylmuramic acid 6-phosphate etherase, found in Crocosphaera subtropica (strain ATCC 51142 / BH68) (Cyanothece sp. (strain ATCC 51142)).